The primary structure comprises 761 residues: uncharacterized protein (761 aa).

A CR-type zinc finger spans residues methionine 1–cysteine 84. The 66-residue stretch at glycine 135 to isoleucine 200 folds into the S1 motif domain.

This is an uncharacterized protein from Methanocaldococcus jannaschii (strain ATCC 43067 / DSM 2661 / JAL-1 / JCM 10045 / NBRC 100440) (Methanococcus jannaschii).